Reading from the N-terminus, the 498-residue chain is ATP synthase subunit alpha 1 (498 aa).

Residue 164–171 (GNRQSGKT) coordinates ATP.

It belongs to the ATPase alpha/beta chains family. As to quaternary structure, F-type ATPases have 2 components, CF(1) - the catalytic core - and CF(0) - the membrane proton channel. CF(1) has five subunits: alpha(3), beta(3), gamma(1), delta(1), epsilon(1). CF(0) has three main subunits: a(1), b(2) and c(9-12). The alpha and beta chains form an alternating ring which encloses part of the gamma chain. CF(1) is attached to CF(0) by a central stalk formed by the gamma and epsilon chains, while a peripheral stalk is formed by the delta and b chains.

The protein localises to the cell membrane. It carries out the reaction ATP + H2O + 4 H(+)(in) = ADP + phosphate + 5 H(+)(out). Functionally, produces ATP from ADP in the presence of a proton gradient across the membrane. The alpha chain is a regulatory subunit. This is ATP synthase subunit alpha 1 from Listeria welshimeri serovar 6b (strain ATCC 35897 / DSM 20650 / CCUG 15529 / CIP 8149 / NCTC 11857 / SLCC 5334 / V8).